A 362-amino-acid chain; its full sequence is Probable dual-specificity RNA methyltransferase RlmN (362 aa).

The Proton acceptor role is filled by Glu105. Positions His111 to Asp344 constitute a Radical SAM core domain. Cysteines 118 and 349 form a disulfide. Residues Cys125, Cys129, and Cys132 each coordinate [4Fe-4S] cluster. S-adenosyl-L-methionine is bound by residues Gly175–Glu176, Ser207, Ser230–His232, and Asn306. Catalysis depends on Cys349, which acts as the S-methylcysteine intermediate.

Belongs to the radical SAM superfamily. RlmN family. The cofactor is [4Fe-4S] cluster.

The protein localises to the cytoplasm. The enzyme catalyses adenosine(2503) in 23S rRNA + 2 reduced [2Fe-2S]-[ferredoxin] + 2 S-adenosyl-L-methionine = 2-methyladenosine(2503) in 23S rRNA + 5'-deoxyadenosine + L-methionine + 2 oxidized [2Fe-2S]-[ferredoxin] + S-adenosyl-L-homocysteine. It carries out the reaction adenosine(37) in tRNA + 2 reduced [2Fe-2S]-[ferredoxin] + 2 S-adenosyl-L-methionine = 2-methyladenosine(37) in tRNA + 5'-deoxyadenosine + L-methionine + 2 oxidized [2Fe-2S]-[ferredoxin] + S-adenosyl-L-homocysteine. Its function is as follows. Specifically methylates position 2 of adenine 2503 in 23S rRNA and position 2 of adenine 37 in tRNAs. In Bacillus cytotoxicus (strain DSM 22905 / CIP 110041 / 391-98 / NVH 391-98), this protein is Probable dual-specificity RNA methyltransferase RlmN.